Reading from the N-terminus, the 249-residue chain is Geranylgeranylglyceryl phosphate synthase (249 aa).

Positions 20 and 49 each coordinate Mg(2+). Residues 169–175 (YLDAGSG), 200–201 (GG), and 222–223 (GN) contribute to the sn-glycerol 1-phosphate site.

This sequence belongs to the GGGP/HepGP synthase family. Group II subfamily. As to quaternary structure, homohexamer. The cofactor is Mg(2+).

The enzyme catalyses sn-glycerol 1-phosphate + (2E,6E,10E)-geranylgeranyl diphosphate = sn-3-O-(geranylgeranyl)glycerol 1-phosphate + diphosphate. Prenyltransferase that catalyzes the transfer of the geranylgeranyl moiety of geranylgeranyl diphosphate (GGPP) to the C3 hydroxyl of sn-glycerol-1-phosphate (G1P). The polypeptide is Geranylgeranylglyceryl phosphate synthase (Spirosoma linguale (strain ATCC 33905 / DSM 74 / LMG 10896 / Claus 1)).